The sequence spans 724 residues: RINT1-like protein (724 aa).

The RINT1/TIP20 domain maps to 163–724; sequence RLHAVQAQSL…LERRMDIKMF (562 aa).

It belongs to the RINT1 family.

During cytokinesis in male meiotic cells, required for completion of cleavage furrow ingression possibly in conjunction with Zw10. Required for maintenance of Golgi stack number and morphology. Essential for acroblast assembly. This chain is RINT1-like protein, found in Drosophila melanogaster (Fruit fly).